The primary structure comprises 52 residues: Disintegrin multisquamatin (52 aa).

A Disintegrin domain is found at 1–50 (EGEECESGPCCRNCKFLKEGTICKRARGDDMDDYCNGKTCDCPRNPHKGP). 4 cysteine pairs are disulfide-bonded: Cys5-Cys14, Cys10-Cys35, Cys11-Cys40, and Cys23-Cys42. The Cell attachment site motif lies at 27–29 (RGD).

Belongs to the venom metalloproteinase (M12B) family. P-II subfamily. P-IIa sub-subfamily. Monomer. Expressed by the venom gland.

The protein resides in the secreted. Its function is as follows. Inhibits ADP-induced human, canine and rabbit platelet aggregation by binding with high affinity to alpha-IIb/beta-3 (ITGA2B/ITGB3). This is Disintegrin multisquamatin from Echis multisquamatus (Central Asian sand viper).